Consider the following 266-residue polypeptide: Undecaprenyl-diphosphatase (266 aa).

Helical transmembrane passes span 3-23, 41-61, 86-106, 108-128, 149-171, 184-204, 220-240, and 245-265; these read MSLL…FLPV, GTET…VVLY, VLVG…AIKA, LNTP…ILVI, FGVG…ATIM, AEYS…LALW, IGFV…LGVV, and FAPF…WLLA.

The protein belongs to the UppP family.

It localises to the cell inner membrane. It catalyses the reaction di-trans,octa-cis-undecaprenyl diphosphate + H2O = di-trans,octa-cis-undecaprenyl phosphate + phosphate + H(+). Its function is as follows. Catalyzes the dephosphorylation of undecaprenyl diphosphate (UPP). Confers resistance to bacitracin. The protein is Undecaprenyl-diphosphatase of Rhizorhabdus wittichii (strain DSM 6014 / CCUG 31198 / JCM 15750 / NBRC 105917 / EY 4224 / RW1) (Sphingomonas wittichii).